We begin with the raw amino-acid sequence, 176 residues long: Thiol:disulfide interchange protein HelX (176 aa).

The first 19 residues, 1 to 19 (MAKPLMFLPLLVMAGFVGA), serve as a signal peptide directing secretion. The 138-residue stretch at 35–172 (ALAGKEAPAV…ITKKIDPLLA (138 aa)) folds into the Thioredoxin domain. Residues cysteine 75 and cysteine 78 are joined by a disulfide bond.

The protein belongs to the thioredoxin family. DsbE subfamily.

The protein resides in the periplasm. Functionally, required for disulfide bond formation in some periplasmic proteins. Also acts as a disulfide oxidoreductase in cytochromes c biogenesis. The cysteines of apocytochromes c must be in the reduced state for covalent linkage between the two moieties to occur. This Rhodobacter capsulatus (strain ATCC BAA-309 / NBRC 16581 / SB1003) protein is Thiol:disulfide interchange protein HelX (helX).